The following is a 673-amino-acid chain: uncharacterized protein (673 aa).

An N-terminal signal peptide occupies residues 1-24; the sequence is MKIHNIIKIIIVVCLEGFALTSFA. The next 6 helical transmembrane spans lie at 224–244, 253–273, 410–430, 436–456, 469–489, and 562–582; these read NAIG…MVLN, IALF…LGPL, IILI…LYFI, CMIT…MMLF, VSLS…LLIT, and VVSI…FYYF. The interval 624 to 673 is disordered; that stretch reads AQATQGKPPSSGDMPGDGGSKRSEGQKGDDSFISSGGNSSGDSLSSSGGK. Basic and acidic residues predominate over residues 642-653; that stretch reads GSKRSEGQKGDD. A compositionally biased stretch (low complexity) spans 654 to 673; sequence SFISSGGNSSGDSLSSSGGK.

Belongs to the TrbL/VirB6 family.

It is found in the cell membrane. This is an uncharacterized protein from Rickettsia bellii (strain RML369-C).